The primary structure comprises 250 residues: Pyridoxine 5'-phosphate synthase (250 aa).

3-amino-2-oxopropyl phosphate-binding residues include N8 and R19. The active-site Proton acceptor is H44. Positions 46 and 51 each coordinate 1-deoxy-D-xylulose 5-phosphate. Catalysis depends on E76, which acts as the Proton acceptor. A 1-deoxy-D-xylulose 5-phosphate-binding site is contributed by T106. Catalysis depends on H200, which acts as the Proton donor. Residues D201 and 223-224 (GH) each bind 3-amino-2-oxopropyl phosphate.

The protein belongs to the PNP synthase family. Homooctamer; tetramer of dimers.

Its subcellular location is the cytoplasm. It catalyses the reaction 3-amino-2-oxopropyl phosphate + 1-deoxy-D-xylulose 5-phosphate = pyridoxine 5'-phosphate + phosphate + 2 H2O + H(+). It functions in the pathway cofactor biosynthesis; pyridoxine 5'-phosphate biosynthesis; pyridoxine 5'-phosphate from D-erythrose 4-phosphate: step 5/5. Functionally, catalyzes the complicated ring closure reaction between the two acyclic compounds 1-deoxy-D-xylulose-5-phosphate (DXP) and 3-amino-2-oxopropyl phosphate (1-amino-acetone-3-phosphate or AAP) to form pyridoxine 5'-phosphate (PNP) and inorganic phosphate. The polypeptide is Pyridoxine 5'-phosphate synthase (Allorhizobium ampelinum (strain ATCC BAA-846 / DSM 112012 / S4) (Agrobacterium vitis (strain S4))).